The sequence spans 1087 residues: Apoptosis-stimulating of p53 protein 1 (1087 aa).

Positions 82 to 122 (HEDSPTESSEQGARQTQEQRTQRSVVNVPGEKRTENGVGNP) are disordered. Residues 87 to 106 (TESSEQGARQTQEQRTQRSV) are compositionally biased toward polar residues. Residues Ser-332 and Ser-335 each carry the phosphoserine modification. Disordered regions lie at residues 374–415 (SSAA…GMEG), 442–721 (IGKG…PNIQ), and 734–878 (GMEG…TGHG). Residues 393-405 (KQNSASVKSTQMT) show a composition bias toward polar residues. The segment covering 445-458 (GPPPIPGVGKPLPP) has biased composition (pro residues). Low complexity predominate over residues 459-476 (SYGTYPSSGPLGPGSTSS). Positions 506–520 (NAPQPGSSQQIQQRI) are enriched in polar residues. Positions 523–536 (PPSPTYPPAGPPAF) are enriched in pro residues. Residue Arg-552 is modified to Asymmetric dimethylarginine. The segment covering 570–589 (QTVNSSSIYSMYLQQATPPK) has biased composition (polar residues). A compositionally biased stretch (low complexity) spans 610 to 625 (PVLPSGSASPSPLPFL). Residues Ser-679 and Ser-708 each carry the phosphoserine modification. Positions 805-831 (PQTTHQTAEPTEDNNNNVAPVPSTEQI) are enriched in polar residues. ANK repeat units lie at residues 917-949 (EGITPLHNAVCAGHHHIVKFLLDFGVNVNAADS) and 950-982 (DGWTPLHCAASCNSVHLCKQLVESGAAIFASTI). The SH3 domain maps to 1016–1078 (MNKGTVYALW…PKNLLGLYPR (63 aa)).

This sequence belongs to the ASPP family. As to quaternary structure, interacts with P53/TP53; the interaction promotes pro-apoptotic activity.

It localises to the cytoplasm. It is found in the nucleus. In terms of biological role, regulator that plays a central role in regulation of apoptosis via its interaction with p53/TP53. Regulates TP53 by enhancing the DNA binding and transactivation function of TP53 on the promoters of proapoptotic genes in vivo. This chain is Apoptosis-stimulating of p53 protein 1 (Ppp1r13b), found in Mus musculus (Mouse).